A 120-amino-acid polypeptide reads, in one-letter code: 5-hydroxyisourate hydrolase 2 (120 aa).

Substrate-binding residues include His10, Arg48, and Tyr117.

It belongs to the transthyretin family. 5-hydroxyisourate hydrolase subfamily. Homotetramer.

The catalysed reaction is 5-hydroxyisourate + H2O = 5-hydroxy-2-oxo-4-ureido-2,5-dihydro-1H-imidazole-5-carboxylate + H(+). Catalyzes the hydrolysis of 5-hydroxyisourate (HIU) to 2-oxo-4-hydroxy-4-carboxy-5-ureidoimidazoline (OHCU). In Rhizobium meliloti (strain 1021) (Ensifer meliloti), this protein is 5-hydroxyisourate hydrolase 2.